Consider the following 715-residue polypeptide: Protein naked cuticle homolog (715 aa).

Residues 18–53 enclose the EF-hand domain; that stretch reads KKPQPLQFSFTLYDLDGHGKITKDDIAGIVSTIYES. A disordered region spans residues 256–282; sequence SRAKRKVVRKSRSSRKASKLTDDFSRP. Positions 257-273 are enriched in basic residues; it reads RAKRKVVRKSRSSRKAS. Positions 305–334 are required for nuclear localization and inhibition of Wnt signaling; sequence ECWKSSLCRRELIEIIRDSMVKNSLCFQPN. The tract at residues 639-690 is disordered; it reads ELHQSVQQQQGTHQQQQQPQSSVSSPTHHHHHHAGASLLGENSGSSASAAST. Composition is skewed to low complexity over residues 642 to 664 and 673 to 690; these read QSVQ…VSSP and GASL…AAST.

The protein belongs to the NKD family.

Its subcellular location is the cell membrane. It localises to the cytoplasm. It is found in the nucleus. Functionally, cell autonomous antagonist of the canonical Wnt signaling pathway. May activate a second Wnt signaling pathway that controls planar cell polarity. Required for neuroblast specification. This Aedes aegypti (Yellowfever mosquito) protein is Protein naked cuticle homolog.